Here is a 982-residue protein sequence, read N- to C-terminus: Serine/threonine-protein kinase ATG1 (982 aa).

One can recognise a Protein kinase domain in the interval F19 to I324. ATP is bound by residues I25–V33 and K48. D162 acts as the Proton acceptor in catalysis. Disordered regions lie at residues D334 to A506, R813 to G834, P898 to A918, and R947 to S982. Basic and acidic residues-rich tracts occupy residues D335–D359 and H372–E387. The segment covering P388–S398 has biased composition (low complexity). The span at S463–A481 shows a compositional bias: polar residues.

It belongs to the protein kinase superfamily. Ser/Thr protein kinase family. APG1/unc-51/ULK1 subfamily. In terms of assembly, homodimer. Forms a ternary complex with ATG13 and ATG17. Uniformly detected in conidia, mycelia and appressoria (at protein level).

The protein localises to the cytoplasm. Its subcellular location is the preautophagosomal structure membrane. It catalyses the reaction L-seryl-[protein] + ATP = O-phospho-L-seryl-[protein] + ADP + H(+). The enzyme catalyses L-threonyl-[protein] + ATP = O-phospho-L-threonyl-[protein] + ADP + H(+). In terms of biological role, serine/threonine protein kinase involved in the cytoplasm to vacuole transport (Cvt) and found to be essential in autophagy, where it is required for the formation of autophagosomes. Involved in the clearance of protein aggregates which cannot be efficiently cleared by the proteasome. Required for selective autophagic degradation of the nucleus (nucleophagy) as well as for mitophagy which contributes to regulate mitochondrial quantity and quality by eliminating the mitochondria to a basal level to fulfill cellular energy requirements and preventing excess ROS production. Also involved in endoplasmic reticulum-specific autophagic process, in selective removal of ER-associated degradation (ERAD) substrates. Plays a key role in ATG9 and ATG23 cycling through the pre-autophagosomal structure and is necessary to promote ATG18 binding to ATG9 through phosphorylation of ATG9. Catalyzes phosphorylation of ATG4, decreasing the interaction between ATG4 and ATG8 and impairing deconjugation of PE-conjugated forms of ATG8. Autophagy is essential to fungal development, production of appressorium turgor, and pathogenicity in rice blast disease. In Pyricularia oryzae (strain 70-15 / ATCC MYA-4617 / FGSC 8958) (Rice blast fungus), this protein is Serine/threonine-protein kinase ATG1.